The sequence spans 74 residues: Kappa-scoloptoxin(03)-Ssm1a (74 aa).

Residues 1–23 (MNSSIAILLVMALIMFSLDKSYS) form the signal peptide. Intrachain disulfides connect Cys32/Cys59, Cys42/Cys58, and Cys45/Cys68.

It belongs to the scoloptoxin-03 family. Expressed by the venom gland.

Its subcellular location is the secreted. Its function is as follows. This toxin inhibits voltage-gated potassium channel currents in DRG neurons (IC(50)=44.2 nM). In vivo, insects injected with this toxin showed signs of neurotoxicity including twitching, paralysis, and body contraction. The polypeptide is Kappa-scoloptoxin(03)-Ssm1a (Scolopendra mutilans (Chinese red-headed centipede)).